The following is a 154-amino-acid chain: Ribosome maturation factor RimP (154 aa).

The protein belongs to the RimP family.

It localises to the cytoplasm. Required for maturation of 30S ribosomal subunits. The chain is Ribosome maturation factor RimP from Acetivibrio thermocellus (strain ATCC 27405 / DSM 1237 / JCM 9322 / NBRC 103400 / NCIMB 10682 / NRRL B-4536 / VPI 7372) (Clostridium thermocellum).